Here is a 238-residue protein sequence, read N- to C-terminus: MYAPGGAGLPGGRRRRSPGSSALPKQPERSLASALPGALSITALCTALAEPAWLHIHGGTCSRQELGVSDVLGYVNPDLLKDFCMNPQTVLLLRVIAAFCFLGILCSLSAFLLDVFGPKHPALKITRRYAFAHILTVLQCATVIGFSYWASELILAQQQQHKKYHGSQVYVTFAVSFYLVAGAGGASILATAANLLRHYPTEEEEQALELLSEMEENDPYPAEYEVINQFQPPPAYTP.

An N-acetylmethionine modification is found at M1. A compositionally biased stretch (gly residues) spans 1–11; that stretch reads MYAPGGAGLPG. The segment at 1–27 is disordered; that stretch reads MYAPGGAGLPGGRRRRSPGSSALPKQP. At S17 the chain carries Phosphoserine. A run of 3 helical transmembrane segments spans residues 96–116, 130–150, and 169–189; these read IAAF…LDVF, AFAH…SYWA, and VYVT…ASIL.

This sequence belongs to the TMEM127 family.

The protein resides in the cell membrane. It is found in the cytoplasm. Its function is as follows. Controls cell proliferation acting as a negative regulator of TOR signaling pathway mediated by mTORC1. May act as a tumor suppressor. This is Transmembrane protein 127 (Tmem127) from Mus musculus (Mouse).